A 470-amino-acid chain; its full sequence is Chitin deacetylase 1 (470 aa).

The signal sequence occupies residues 1–19; sequence MFTFAAFSALLISLAGVVA. Residues N101 and N121 are each glycosylated (N-linked (GlcNAc...) asparagine). An intrachain disulfide couples C155 to C363. Residues 159–358 enclose the NodB homology domain; it reads NVWGLSYDDG…VLANGTYQLK (200 aa). The Proton acceptor role is filled by D166. D166 lines the acetate pocket. Co(2+) is bound by residues D167, H216, and H220. Residue Y257 participates in acetate binding. H331 acts as the Proton donor in catalysis. N-linked (GlcNAc...) asparagine glycosylation is found at N352, N378, and N440. A disordered region spans residues 406-447; sequence EVSAPSEATGSTAAGSAASTTSGSGASASTGAASNTSSSGSG. Residues 408-447 are compositionally biased toward low complexity; the sequence is SAPSEATGSTAAGSAASTTSGSGASASTGAASNTSSSGSG. S444 carries GPI-anchor amidated serine lipidation. A propeptide spans 445 to 470 (removed in mature form); that stretch reads GSGRSATMGGALIALAAVAVGMVYVA.

This sequence belongs to the polysaccharide deacetylase family. It depends on Co(2+) as a cofactor.

The protein localises to the secreted. It is found in the cell wall. The protein resides in the cell membrane. The enzyme catalyses [(1-&gt;4)-N-acetyl-beta-D-glucosaminyl](n) + n H2O = chitosan + n acetate. In terms of biological role, hydrolyzes the N-acetamido groups of N-acetyl-D-glucosamine residues in chitin to form chitosan and acetate. Chitosan is required to anchor melanin to the cell wall, for maintenance of cell wall integrity, and for proper cytokinesis. Plays a major role in synthesizing cell wall chitosan during host infection; chitosan offers an advantage during infection as it is less readily detected than chitin by host immunosurveillance mechanisms. This chain is Chitin deacetylase 1, found in Cryptococcus neoformans var. grubii serotype A (strain H99 / ATCC 208821 / CBS 10515 / FGSC 9487) (Filobasidiella neoformans var. grubii).